Consider the following 449-residue polypeptide: Glucose-6-phosphate isomerase (449 aa).

The active-site Proton donor is Glu291. Active-site residues include His312 and Lys426.

Belongs to the GPI family.

Its subcellular location is the cytoplasm. The catalysed reaction is alpha-D-glucose 6-phosphate = beta-D-fructose 6-phosphate. The protein operates within carbohydrate biosynthesis; gluconeogenesis. It functions in the pathway carbohydrate degradation; glycolysis; D-glyceraldehyde 3-phosphate and glycerone phosphate from D-glucose: step 2/4. Its function is as follows. Catalyzes the reversible isomerization of glucose-6-phosphate to fructose-6-phosphate. This is Glucose-6-phosphate isomerase from Streptococcus pneumoniae (strain ATCC BAA-255 / R6).